A 376-amino-acid polypeptide reads, in one-letter code: Alanine racemase (376 aa).

The Proton acceptor; specific for D-alanine role is filled by lysine 40. Lysine 40 carries the N6-(pyridoxal phosphate)lysine modification. Arginine 138 is a substrate binding site. The active-site Proton acceptor; specific for L-alanine is tyrosine 270. Methionine 317 is a binding site for substrate.

It belongs to the alanine racemase family. Requires pyridoxal 5'-phosphate as cofactor.

The enzyme catalyses L-alanine = D-alanine. It participates in amino-acid biosynthesis; D-alanine biosynthesis; D-alanine from L-alanine: step 1/1. Functionally, catalyzes the interconversion of L-alanine and D-alanine. May also act on other amino acids. The polypeptide is Alanine racemase (alr) (Lactobacillus delbrueckii subsp. bulgaricus (strain ATCC BAA-365 / Lb-18)).